The following is a 539-amino-acid chain: Keratin, type II cytoskeletal 73 (539 aa).

The tract at residues Met1–Gln130 is head. The segment at Glu131–Leu166 is coil 1A. The region spanning Glu131–Met444 is the IF rod domain. The interval Gln167–His185 is linker 1. The interval Ile186 to Met277 is coil 1B. The tract at residues Gln278 to Ile301 is linker 12. The interval Ile302–Glu440 is coil 2. The tail stretch occupies residues Glu441–Arg539.

Belongs to the intermediate filament family. Heterotetramer of two type I and two type II keratins.

Has a role in hair formation. Specific component of keratin intermediate filaments in the inner root sheath (IRS) of the hair follicle. The chain is Keratin, type II cytoskeletal 73 (Krt73) from Mus musculus (Mouse).